Consider the following 892-residue polypeptide: UPF0182 protein Gura_0902 (892 aa).

7 helical membrane-spanning segments follow: residues 6–26 (FIIILVVVAVILPFISSLINF), 50–70 (VGAGLFFGVLLFIFAMINLHF), 103–123 (LGILASAILAILACKWGAMQW), 158–178 (MLKIFAGFTVLATTVLVGAVY), 201–221 (LAVLIGIFSLTVAAGFYLNGC), 248–268 (ILTVLTPLAGAILAAGLWQGA), and 271–291 (LALLPPILVIAVYGIGIKAYP).

It belongs to the UPF0182 family.

The protein resides in the cell membrane. This chain is UPF0182 protein Gura_0902, found in Geotalea uraniireducens (strain Rf4) (Geobacter uraniireducens).